A 238-amino-acid polypeptide reads, in one-letter code: ATP synthase subunit a (238 aa).

5 helical membrane-spanning segments follow: residues 15–35 (IFNL…FVFI), 76–96 (YSLF…LGLM), 111–131 (PTAN…LTHI), 167–187 (LALR…LLLL), and 208–230 (AFSV…VYLG).

The protein belongs to the ATPase A chain family. In terms of assembly, F-type ATPases have 2 components, CF(1) - the catalytic core - and CF(0) - the membrane proton channel. CF(1) has five subunits: alpha(3), beta(3), gamma(1), delta(1), epsilon(1). CF(0) has three main subunits: a(1), b(2) and c(9-12). The alpha and beta chains form an alternating ring which encloses part of the gamma chain. CF(1) is attached to CF(0) by a central stalk formed by the gamma and epsilon chains, while a peripheral stalk is formed by the delta and b chains.

It localises to the cell membrane. Key component of the proton channel; it plays a direct role in the translocation of protons across the membrane. The chain is ATP synthase subunit a from Streptococcus pneumoniae serotype 19F (strain G54).